The sequence spans 318 residues: MSASDGNTAELWVPTGSVTVRVPGKVNLYLAVGDRREDGYHELTTVFHAVSLVDEVTVRNADVLSLELVGEGADQLPTDERNLAWQAAELMAEHVGRAPDVSIMIDKSIPVAGGMAGGSADAAAVLVAMNSLWELNVPRRDLRMLAARLGSDVPFALHGGTALGTGRGEELATVLSRNTFHWVLAFADSGLLTSAVYNELDRLREVGDPPRLGEPGPVLAALAAGDPDQLAPLLGNEMQAAAVSLDPALARALRAGVEAGALAGIVSGSGPTCAFLCTSASSAIDVGAQLSGAGVCRTVRVATGPVPGARVVSAPTEV.

K25 is a catalytic residue. ATP is bound at residue 110-120 (PVAGGMAGGSA). D152 is an active-site residue.

Belongs to the GHMP kinase family. IspE subfamily.

It catalyses the reaction 4-CDP-2-C-methyl-D-erythritol + ATP = 4-CDP-2-C-methyl-D-erythritol 2-phosphate + ADP + H(+). It functions in the pathway isoprenoid biosynthesis; isopentenyl diphosphate biosynthesis via DXP pathway; isopentenyl diphosphate from 1-deoxy-D-xylulose 5-phosphate: step 3/6. Functionally, catalyzes the phosphorylation of the position 2 hydroxy group of 4-diphosphocytidyl-2C-methyl-D-erythritol. The sequence is that of 4-diphosphocytidyl-2-C-methyl-D-erythritol kinase from Mycobacterium tuberculosis (strain ATCC 25177 / H37Ra).